The chain runs to 717 residues: Glutamate--cysteine ligase (717 aa).

Residues 484-576 (SKTTEQRAAK…TDSDHTDTDD (93 aa)) form a disordered region. Low complexity-rich tracts occupy residues 492–518 (AKAQAQAQAQAKAQAQTNGKATLNGNG) and 551–567 (GTTNGTNGSSNGSSNGT).

It belongs to the glutamate--cysteine ligase type 3 family.

It catalyses the reaction L-cysteine + L-glutamate + ATP = gamma-L-glutamyl-L-cysteine + ADP + phosphate + H(+). It carries out the reaction (2S)-2-aminobutanoate + L-glutamate + ATP = gamma-L-glutamyl-(2S)-2-aminobutanoate + ADP + phosphate + H(+). It participates in sulfur metabolism; glutathione biosynthesis; glutathione from L-cysteine and L-glutamate: step 1/2. Functionally, catalyzes the ATP-dependent ligation of L-glutamate and L-cysteine and participates in the first and rate-limiting step in glutathione biosynthesis. The sequence is that of Glutamate--cysteine ligase from Drosophila melanogaster (Fruit fly).